The chain runs to 226 residues: Ribonuclease 3 (226 aa).

Residues 6-128 (INRLQRKLGY…LIGGVFLDSN (123 aa)) form the RNase III domain. Residue glutamate 41 participates in Mg(2+) binding. The active site involves aspartate 45. Aspartate 114 and glutamate 117 together coordinate Mg(2+). Residue glutamate 117 is part of the active site. Residues 155 to 225 (DPKTRLQEYL…AEQVLKKLEL (71 aa)) form the DRBM domain.

It belongs to the ribonuclease III family. Homodimer. It depends on Mg(2+) as a cofactor.

It is found in the cytoplasm. It catalyses the reaction Endonucleolytic cleavage to 5'-phosphomonoester.. In terms of biological role, digests double-stranded RNA. Involved in the processing of primary rRNA transcript to yield the immediate precursors to the large and small rRNAs (23S and 16S). Processes some mRNAs, and tRNAs when they are encoded in the rRNA operon. Processes pre-crRNA and tracrRNA of type II CRISPR loci if present in the organism. In Salmonella choleraesuis (strain SC-B67), this protein is Ribonuclease 3.